The following is a 272-amino-acid chain: ATP synthase subunit delta (272 aa).

The protein belongs to the ATPase delta chain family. F-type ATPases have 2 components, F(1) - the catalytic core - and F(0) - the membrane proton channel. F(1) has five subunits: alpha(3), beta(3), gamma(1), delta(1), epsilon(1). F(0) has three main subunits: a(1), b(2) and c(10-14). The alpha and beta chains form an alternating ring which encloses part of the gamma chain. F(1) is attached to F(0) by a central stalk formed by the gamma and epsilon chains, while a peripheral stalk is formed by the delta and b chains.

The protein resides in the cell membrane. Its function is as follows. F(1)F(0) ATP synthase produces ATP from ADP in the presence of a proton or sodium gradient. F-type ATPases consist of two structural domains, F(1) containing the extramembraneous catalytic core and F(0) containing the membrane proton channel, linked together by a central stalk and a peripheral stalk. During catalysis, ATP synthesis in the catalytic domain of F(1) is coupled via a rotary mechanism of the central stalk subunits to proton translocation. Functionally, this protein is part of the stalk that links CF(0) to CF(1). It either transmits conformational changes from CF(0) to CF(1) or is implicated in proton conduction. This chain is ATP synthase subunit delta, found in Corynebacterium urealyticum (strain ATCC 43042 / DSM 7109).